The following is a 432-amino-acid chain: Heme-based aerotactic transducer HemAT (432 aa).

The Methyl-accepting transducer domain maps to 184–420 (YNQTRDEQEE…EVSRAVSHVA (237 aa)).

It belongs to the methyl-accepting chemotaxis (MCP) protein family. In terms of assembly, homotetramer.

Functionally, heme-containing signal transducer responsible for aerotaxis, the migratory response toward or away from oxygen. The chain is Heme-based aerotactic transducer HemAT (hemAT) from Bacillus subtilis (strain 168).